We begin with the raw amino-acid sequence, 964 residues long: uncharacterized protein (964 aa).

The span at 97–117 shows a compositional bias: acidic residues; it reads DSESDVGSDAESDAESDAESD. Positions 97–208 are disordered; the sequence is DSESDVGSDA…SNSIDNESES (112 aa). Residues 121-148 are compositionally biased toward low complexity; sequence HTQNNTNTPINNITLINLDSSNNSTQSD. Residues 149–163 are compositionally biased toward acidic residues; that stretch reads NESDNESDNESDNES. The span at 192 to 203 shows a compositional bias: low complexity; it reads NSDNIGNSNSID.

This is an uncharacterized protein from Acanthamoeba polyphaga (Amoeba).